The sequence spans 604 residues: Elongation factor 4 (604 aa).

The tr-type G domain occupies 10–191; it reads KNIRNFSIIA…KIITTIPAPS (182 aa). GTP is bound by residues 22 to 27 and 138 to 141; these read DHGKST and NKID.

The protein belongs to the TRAFAC class translation factor GTPase superfamily. Classic translation factor GTPase family. LepA subfamily.

It localises to the cell inner membrane. The enzyme catalyses GTP + H2O = GDP + phosphate + H(+). Its function is as follows. Required for accurate and efficient protein synthesis under certain stress conditions. May act as a fidelity factor of the translation reaction, by catalyzing a one-codon backward translocation of tRNAs on improperly translocated ribosomes. Back-translocation proceeds from a post-translocation (POST) complex to a pre-translocation (PRE) complex, thus giving elongation factor G a second chance to translocate the tRNAs correctly. Binds to ribosomes in a GTP-dependent manner. In Helicobacter pylori (strain J99 / ATCC 700824) (Campylobacter pylori J99), this protein is Elongation factor 4.